The sequence spans 182 residues: Oligoribonuclease (182 aa).

One can recognise an Exonuclease domain in the interval 8-171; that stretch reads LIWIDLEMTG…DDIRESIKEL (164 aa). The active site involves Y129.

The protein belongs to the oligoribonuclease family.

The protein resides in the cytoplasm. Its function is as follows. 3'-to-5' exoribonuclease specific for small oligoribonucleotides. In Haemophilus influenzae (strain ATCC 51907 / DSM 11121 / KW20 / Rd), this protein is Oligoribonuclease (orn).